Here is an 84-residue protein sequence, read N- to C-terminus: CDC42 small effector protein 2 (84 aa).

Residues C10 and C11 are each lipidated (S-palmitoyl cysteine). Positions 29 to 42 constitute a CRIB domain; that stretch reads IGEPTNFVHTAHVG. S43 and S52 each carry phosphoserine.

The protein belongs to the CDC42SE/SPEC family. Interacts with CDC42 (in GTP-bound form). Interacts weakly with RAC1 and not at all with RHOA. Widely expressed. Expressed at higher level in T-lymphocytes. Highly expressed in CCRF-CEM T-lymphocytes, Jurkat T-lymphocytes, and Raji B-lymphocytes compared (at protein level).

The protein localises to the cytoplasm. It localises to the cytoskeleton. Its subcellular location is the cell membrane. It is found in the cell projection. The protein resides in the phagocytic cup. In terms of biological role, probably involved in the organization of the actin cytoskeleton by acting downstream of CDC42, inducing actin filament assembly. Alters CDC42-induced cell shape changes. In activated T-cells, may play a role in CDC42-mediated F-actin accumulation at the immunological synapse. May play a role in early contractile events in phagocytosis in macrophages. This chain is CDC42 small effector protein 2 (CDC42SE2), found in Homo sapiens (Human).